The sequence spans 363 residues: Dihydroorotate dehydrogenase (quinone) (363 aa).

Residues alanine 62–lysine 66 and threonine 86 contribute to the FMN site. Lysine 66 is a substrate binding site. Asparagine 111–phenylalanine 115 contributes to the substrate binding site. Residues asparagine 140 and asparagine 171 each coordinate FMN. Asparagine 171 is a binding site for substrate. The Nucleophile role is filled by serine 174. A substrate-binding site is contributed by asparagine 176. Residues lysine 216 and serine 244 each contribute to the FMN site. Substrate is bound at residue asparagine 245–threonine 246. Residues glycine 266, glycine 295, and tyrosine 316 to threonine 317 contribute to the FMN site.

It belongs to the dihydroorotate dehydrogenase family. Type 2 subfamily. In terms of assembly, monomer. It depends on FMN as a cofactor.

It is found in the cell membrane. It catalyses the reaction (S)-dihydroorotate + a quinone = orotate + a quinol. The protein operates within pyrimidine metabolism; UMP biosynthesis via de novo pathway; orotate from (S)-dihydroorotate (quinone route): step 1/1. In terms of biological role, catalyzes the conversion of dihydroorotate to orotate with quinone as electron acceptor. This chain is Dihydroorotate dehydrogenase (quinone), found in Chelativorans sp. (strain BNC1).